Reading from the N-terminus, the 443-residue chain is ATP-dependent protease ATPase subunit HslU (443 aa).

ATP is bound by residues I18, 60-65 (GVGKTE), D256, E321, and R393.

The protein belongs to the ClpX chaperone family. HslU subfamily. In terms of assembly, a double ring-shaped homohexamer of HslV is capped on each side by a ring-shaped HslU homohexamer. The assembly of the HslU/HslV complex is dependent on binding of ATP.

Its subcellular location is the cytoplasm. ATPase subunit of a proteasome-like degradation complex; this subunit has chaperone activity. The binding of ATP and its subsequent hydrolysis by HslU are essential for unfolding of protein substrates subsequently hydrolyzed by HslV. HslU recognizes the N-terminal part of its protein substrates and unfolds these before they are guided to HslV for hydrolysis. The protein is ATP-dependent protease ATPase subunit HslU of Tolumonas auensis (strain DSM 9187 / NBRC 110442 / TA 4).